A 546-amino-acid polypeptide reads, in one-letter code: Beta-amylase (546 aa).

Positions 1 to 30 (MKNQFQYCCIVILSVVMLFVSLLIPQASSA) are cleaved as a signal peptide. Substrate is bound at residue Asp79. The Ca(2+) site is built by Glu86, Asp90, and Gln91. His119 and Asp127 together coordinate substrate. The cysteines at positions 121 and 129 are disulfide-linked. 2 residues coordinate Ca(2+): Glu171 and Glu174. The Proton donor role is filled by Glu202. The substrate site is built by Lys317, His322, and Thr360. The active-site Proton acceptor is the Glu397. Residues 398–399 (NA) and Arg427 each bind substrate. The CBM20 domain maps to 444–546 (LLGVTPVMQT…LKTTSHTSSW (103 aa)).

It belongs to the glycosyl hydrolase 14 family. In terms of assembly, monomer. Ca(2+) serves as cofactor.

It carries out the reaction Hydrolysis of (1-&gt;4)-alpha-D-glucosidic linkages in polysaccharides so as to remove successive maltose units from the non-reducing ends of the chains.. The protein is Beta-amylase (spoII) of Bacillus cereus.